Consider the following 161-residue polypeptide: Ribonuclease H (161 aa).

In terms of domain architecture, RNase H type-1 spans 5-149 (EKLAIAAATD…VDAIAVAFSK (145 aa)). Asp-14, Glu-53, Asp-78, and Asp-141 together coordinate Mg(2+).

It belongs to the RNase H family. Monomer. Mg(2+) serves as cofactor.

The protein localises to the cytoplasm. It carries out the reaction Endonucleolytic cleavage to 5'-phosphomonoester.. Functionally, endonuclease that specifically degrades the RNA of RNA-DNA hybrids. The sequence is that of Ribonuclease H from Prochlorococcus marinus (strain NATL2A).